A 61-amino-acid polypeptide reads, in one-letter code: Large ribosomal subunit protein bL33 (61 aa).

Belongs to the bacterial ribosomal protein bL33 family.

This chain is Large ribosomal subunit protein bL33, found in Amoebophilus asiaticus (strain 5a2).